The sequence spans 159 residues: Major latex protein 149 (159 aa).

This sequence belongs to the MLP family. As to expression, laticifer.

It is found in the vacuole. The protein resides in the cytoplasmic vesicle. Its function is as follows. Not known; MLPs constitute up to 50% of the soluble latex protein. The sequence is that of Major latex protein 149 (MLP149) from Papaver somniferum (Opium poppy).